Reading from the N-terminus, the 481-residue chain is RAC-alpha serine/threonine-protein kinase (481 aa).

The PH domain occupies 5-108; the sequence is AIVKEGWLHK…WIQVIQHVAD (104 aa). A disordered region spans residues 120–141; it reads VRSGDSPSDNSGAEEMEVSHSK. Ser-127 and Ser-130 each carry an O-linked (GlcNAc) serine glycan. In terms of domain architecture, Protein kinase spans 151–409; sequence FEYLKLLGKG…AKEIMQHKFF (259 aa). ATP-binding positions include 157–165 and Lys-180; that span reads LGKGTFGKV. Asp-275 (proton acceptor) is an active-site residue. The O-linked (GlcNAc) threonine glycan is linked to Thr-306. Thr-309 is subject to Phosphothreonine; by PDPK1. O-linked (GlcNAc) threonine glycosylation is present at Thr-313. Residues 410 to 481 enclose the AGC-kinase C-terminal domain; the sequence is AGIVWQDVYE…QFSYSASGNA (72 aa). At Ser-474 the chain carries Phosphoserine. Residue Ser-474 is glycosylated (O-linked (GlcNAc) serine; alternate). At Tyr-475 the chain carries Phosphotyrosine.

It belongs to the protein kinase superfamily. AGC Ser/Thr protein kinase family. RAC subfamily. Cleavage by caspase-3/CASP3. Cleaved at the caspase-3 consensus site Asp-463 during apoptosis, resulting in down-regulation of the AKT signaling pathway and decreased cell survival. Post-translationally, phosphorylation on Thr-309 and Ser-474 is required for full activity. Phosphorylation of the activation loop at Thr-309 by PDPK1/PDK1 is a prerequisite for full activation. Phosphorylation by mTORC2 at Ser-474 in response to growth factors plays a key role in AKT1 activation by facilitating subsequent phosphorylation of the activation loop by PDPK1/PDK1. As to expression, expressed in the oocyte.

The protein resides in the cytoplasm. It localises to the nucleus. It catalyses the reaction L-seryl-[protein] + ATP = O-phospho-L-seryl-[protein] + ADP + H(+). The enzyme catalyses L-threonyl-[protein] + ATP = O-phospho-L-threonyl-[protein] + ADP + H(+). Its activity is regulated as follows. Activated in response to insulin. Three specific sites, one in the kinase domain (Thr-309) and the two other ones in the C-terminal regulatory region (Ser-474 and Tyr-475), need to be phosphorylated for its full activation. In terms of biological role, AKT1 is one of several closely related serine/threonine-protein kinases known as the AKT kinase, and which regulate many processes including metabolism, proliferation, cell survival, growth and angiogenesis. This is mediated through serine and/or threonine phosphorylation of a range of downstream substrates. Over 100 substrate candidates have been reported so far, but for most of them, no isoform specificity has been reported. Signals downstream of phosphatidylinositol 3-kinase (PI(3)K) to mediate the effects of various growth factors such as platelet-derived growth factor (PDGF), epidermal growth factor (EGF), insulin and insulin-like growth factor 1 (IGF1). Plays a role as a key modulator of the AKT-mTOR signaling pathway controlling the tempo of the process of newborn neurons integration during adult neurogenesis, including correct neuron positioning, dendritic development and synapse formation. Plays a role in glucose transport by mediating insulin-induced translocation of the GLUT4 glucose transporter to the cell surface. Mediates the antiapoptotic effects of IGF1. Mediates insulin-stimulated protein synthesis, partly by playing a role in both insulin-induced phosphorylation of 4E-BP1 and in insulin-induced activation of p70 S6 kinase. Promotes glycogen synthesis by mediating the insulin-induced activation of glycogen synthase. Required for insulin-stimulated meiotic reinitiation during oocyte maturation. May be involved in the regulation of vesicular functions such as preciliary trafficking and endocytic recycling. The chain is RAC-alpha serine/threonine-protein kinase from Xenopus laevis (African clawed frog).